The following is a 132-amino-acid chain: Large ribosomal subunit protein bL12 (132 aa).

Over residues 100-126 the composition is skewed to basic and acidic residues; sequence ESTPKPVKEGASKEDAEAAKKELEEAG. Residues 100-132 are disordered; it reads ESTPKPVKEGASKEDAEAAKKELEEAGAKVSIK.

This sequence belongs to the bacterial ribosomal protein bL12 family. Homodimer. Part of the ribosomal stalk of the 50S ribosomal subunit. Forms a multimeric L10(L12)X complex, where L10 forms an elongated spine to which 2 to 4 L12 dimers bind in a sequential fashion. Binds GTP-bound translation factors.

Its function is as follows. Forms part of the ribosomal stalk which helps the ribosome interact with GTP-bound translation factors. Is thus essential for accurate translation. The sequence is that of Large ribosomal subunit protein bL12 from Thermosynechococcus vestitus (strain NIES-2133 / IAM M-273 / BP-1).